A 171-amino-acid polypeptide reads, in one-letter code: Ribosome-binding factor A (171 aa).

Over residues 126–138 (VREGAKHAGDADP) the composition is skewed to basic and acidic residues. A disordered region spans residues 126-171 (VREGAKHAGDADPYRVSGVEEEAGGSGEVQAEFDAEDTGDRNRQDD).

This sequence belongs to the RbfA family. Monomer. Binds 30S ribosomal subunits, but not 50S ribosomal subunits or 70S ribosomes.

The protein resides in the cytoplasm. In terms of biological role, one of several proteins that assist in the late maturation steps of the functional core of the 30S ribosomal subunit. Associates with free 30S ribosomal subunits (but not with 30S subunits that are part of 70S ribosomes or polysomes). Required for efficient processing of 16S rRNA. May interact with the 5'-terminal helix region of 16S rRNA. The sequence is that of Ribosome-binding factor A from Mycobacterium sp. (strain JLS).